The primary structure comprises 962 residues: Putative primase C962R (962 aa).

An SF3 helicase domain is found at 607–775 (ELDARLWIMF…PDPGNPYEKK (169 aa)). 636–643 (GGGCNGKT) serves as a coordination point for ATP.

Belongs to the asfivirus helicase C962R family.

The sequence is that of Putative primase C962R from African swine fever virus (strain Badajoz 1971 Vero-adapted) (Ba71V).